The primary structure comprises 88 residues: L-amino-acid oxidase (88 aa).

FAD-binding positions include Glu74 and 81-86 (GWIDST). Substrate is bound at residue 81-82 (GW).

This sequence belongs to the flavin monoamine oxidase family. FIG1 subfamily. As to quaternary structure, homodimer; non-covalently linked. Requires FAD as cofactor. In terms of processing, N-glycosylated. In terms of tissue distribution, expressed by the venom gland.

It localises to the secreted. The catalysed reaction is an L-alpha-amino acid + O2 + H2O = a 2-oxocarboxylate + H2O2 + NH4(+). The enzyme catalyses L-leucine + O2 + H2O = 4-methyl-2-oxopentanoate + H2O2 + NH4(+). It catalyses the reaction L-phenylalanine + O2 + H2O = 3-phenylpyruvate + H2O2 + NH4(+). It carries out the reaction L-tryptophan + O2 + H2O = indole-3-pyruvate + H2O2 + NH4(+). The catalysed reaction is L-methionine + O2 + H2O = 4-methylsulfanyl-2-oxobutanoate + H2O2 + NH4(+). The enzyme catalyses L-isoleucine + O2 + H2O = (S)-3-methyl-2-oxopentanoate + H2O2 + NH4(+). It catalyses the reaction L-arginine + O2 + H2O = 5-guanidino-2-oxopentanoate + H2O2 + NH4(+). It carries out the reaction L-histidine + O2 + H2O = 3-(imidazol-5-yl)pyruvate + H2O2 + NH4(+). The catalysed reaction is L-asparagine + O2 + H2O = 2-oxosuccinamate + H2O2 + NH4(+). The enzyme catalyses L-valine + O2 + H2O = 3-methyl-2-oxobutanoate + H2O2 + NH4(+). It catalyses the reaction L-glutamate + O2 + H2O = H2O2 + 2-oxoglutarate + NH4(+). Its function is as follows. Catalyzes an oxidative deamination of predominantly hydrophobic and aromatic L-amino acids, thus producing hydrogen peroxide that may contribute to the diverse toxic effects of this enzyme. Is highly active on L-Met, L-Leu, L-Phe, L-Ile, and L-Arg, moderately active on L-His, L-Trp, L-Asn, L-Glu, and L-Val, and weakly or not active on L-Gln, L-Lys, L-Asp, L-Ala, L-Tyr, L-Ser, L-Pro, L-Gly, L-Thr, and L-Cys. Exhibits diverse biological activities, such as hemorrhage, hemolysis, edema, apoptosis of vascular endothelial cells or tumor cell lines, antibacterial and antiparasitic activities. In addition, this protein has an ability to induce apoptosis in cultured HeLa and K562 cells, and inhibits ADP-induced platelet aggregation dose-dependently. Effects of snake L-amino oxidases on platelets are controversial, since they either induce aggregation or inhibit agonist-induced aggregation. These different effects are probably due to different experimental conditions. This Vipera berus berus (Common viper) protein is L-amino-acid oxidase.